Reading from the N-terminus, the 72-residue chain is Translation initiation factor IF-1 (72 aa).

The S1-like domain occupies 1–72; sequence MSKDDVIEID…DKGRITYRYK (72 aa).

The protein belongs to the IF-1 family. In terms of assembly, component of the 30S ribosomal translation pre-initiation complex which assembles on the 30S ribosome in the order IF-2 and IF-3, IF-1 and N-formylmethionyl-tRNA(fMet); mRNA recruitment can occur at any time during PIC assembly.

It localises to the cytoplasm. One of the essential components for the initiation of protein synthesis. Stabilizes the binding of IF-2 and IF-3 on the 30S subunit to which N-formylmethionyl-tRNA(fMet) subsequently binds. Helps modulate mRNA selection, yielding the 30S pre-initiation complex (PIC). Upon addition of the 50S ribosomal subunit IF-1, IF-2 and IF-3 are released leaving the mature 70S translation initiation complex. This Campylobacter hominis (strain ATCC BAA-381 / DSM 21671 / CCUG 45161 / LMG 19568 / NCTC 13146 / CH001A) protein is Translation initiation factor IF-1.